The sequence spans 264 residues: Undecaprenyl-diphosphatase (264 aa).

The next 8 membrane-spanning stretches (helical) occupy residues 7–27, 41–61, 89–109, 114–134, 144–164, 186–206, 219–239, and 244–264; these read IVLA…SAHL, LIFD…YYQA, VLLG…FVAV, IEII…ASWF, TISW…LIPG, IQFS…LMLI, LLVL…IFVI, and MVGM…LFFL.

It belongs to the UppP family.

The protein localises to the cell inner membrane. The catalysed reaction is di-trans,octa-cis-undecaprenyl diphosphate + H2O = di-trans,octa-cis-undecaprenyl phosphate + phosphate + H(+). Functionally, catalyzes the dephosphorylation of undecaprenyl diphosphate (UPP). Confers resistance to bacitracin. The chain is Undecaprenyl-diphosphatase from Vesicomyosocius okutanii subsp. Calyptogena okutanii (strain HA).